The sequence spans 441 residues: COP9 signalosome complex subunit 1 (441 aa).

The tract at residues 1 to 28 is disordered; it reads MERDEEASGPMMEMCTNGGEETSNRRPI. The region spanning 230-400 is the PCI domain; that stretch reads KYKLAARKFL…KILYARHADQ (171 aa).

The protein belongs to the CSN1 family. In terms of assembly, component of the CSN complex, probably composed of CSN1, CSN2, CSN3, CSN4, CSN5 (CSN5A or CSN5B), CSN6 (CSN6A or CSN6B), CSN7 and CSN8. Interacts with itself and (via PCI domain) with CSN7 (via PCI domain). In the CSN complex, it probably interacts directly with CSN2, CSN3, CSN4 and CSN5B. Interacts with the 26S proteasome subunit RPN6. Interacts (via N-terminal domain) with TSA1 (via C-terminal domain). Binds to the translation initiation factors TIF3C1, TIF3E1 and TIF3H1. As to expression, expressed in leaves, flowers, immature siliques, and light-grown roots.

The protein localises to the cytoplasm. It localises to the nucleus. In terms of biological role, component of the COP9 signalosome complex (CSN), a complex involved in various cellular and developmental processes such as photomorphogenesis and auxin and jasmonate responses. The CSN complex is an essential regulator of the ubiquitin (Ubl) conjugation pathway by mediating the deneddylation of the cullin subunits of SCF-type E3 ligase complexes, leading to decrease the Ubl ligase activity of SCF. It is involved in repression of photomorphogenesis in darkness by regulating the activity of COP1-containing Ubl ligase complexes. The complex is also required for degradation of IAA6 by regulating the activity of the Ubl ligase SCF-TIR complex. In the complex, it plays a central role in CSN assembly. This chain is COP9 signalosome complex subunit 1 (CSN1), found in Arabidopsis thaliana (Mouse-ear cress).